The chain runs to 796 residues: RalBP1-associated Eps domain-containing protein 1 (796 aa).

Residues 10 to 113 form the EH 1 domain; sequence EQKYYSDLFS…SKNEQESRHA (104 aa). The tract at residues 105–237 is disordered; sequence KNEQESRHAA…ENWVSFADTP (133 aa). Over residues 115 to 126 the composition is skewed to polar residues; that stretch reads SYSSDSENQGSY. Phosphoserine is present on residues Ser143, Ser145, Ser162, Ser166, and Ser170. The segment covering 145–156 has biased composition (polar residues); the sequence is SHDTVQPRTSAD. Thr173 is subject to Phosphothreonine. A phosphoserine mark is found at Ser272 and Ser273. The EH 2 domain maps to 285 to 374; it reads QRQYYVNQFK…ESLMPKLIDL (90 aa). Tyr288 is subject to Phosphotyrosine. Ser307 carries the phosphoserine modification. The 36-residue stretch at 318 to 353 folds into the EF-hand domain; that stretch reads LPILELSHIWELSDFDKDGALTLDEFCAAFHLVVAR. Ca(2+) is bound by residues Asp331, Asp333, Asp335, and Glu342. The segment at 377–433 is disordered; it reads SADVGDQPGEVGYSGSPAEAPPSKSPSMPSLNQTWPELNQSSEQWETFSERSSSSQT. Over residues 407-433 the composition is skewed to polar residues; sequence LNQTWPELNQSSEQWETFSERSSSSQT. Phosphoserine is present on residues Ser475, Ser482, Ser489, and Ser540. Residues 506–543 show a composition bias toward polar residues; it reads GNTVADGYSSSDSFTSDPEQIGSNVTRQRSHSGTSPDN. 2 disordered regions span residues 506–624 and 638–725; these read GNTV…IPEQ and ASNV…QKTG. Thr544 is subject to Phosphothreonine. Over residues 544–554 the composition is skewed to pro residues; sequence TAPPPPPPRPQ. The residue at position 562 (Ser562) is a Phosphoserine. The segment covering 563–574 has biased composition (polar residues); that stretch reads LDMNRTFTVTTG. Residues 575 to 584 are compositionally biased toward low complexity; it reads QQQAGVVAHP. The span at 585–596 shows a compositional bias: pro residues; sequence PAVPPRPQPSQA. Over residues 612–623 the composition is skewed to polar residues; the sequence is THTSTSPQQIPE. Residues 652–796 are interaction with RALBP1; that stretch reads HPEVLPAEKA…LEQLRPFSHL (145 aa). 2 stretches are compositionally biased toward basic and acidic residues: residues 671–681 and 708–722; these read AKTDSKTEEKT and KSED…EHTQ. A phosphoserine mark is found at Ser709 and Ser740. Residues 751-791 are a coiled coil; that stretch reads SIRRNKETNTVLARLNSELQQQLKDVLEERISLEVQLEQLR.

In terms of assembly, homodimer (Potential). Interacts with RAB11FIP2. Interacts with RALBP1, CRK and GRB2. Binding to RALBP1 does not affect its Ral-binding activity. Forms a complex with the SH3 domains of CRK and GRB2 which may link it to an EGF-responsive tyrosine kinase. Interacts with AMPH, ITSN1 (via SH3 domains) and SGIP1; may be involved in clathrin-mediated endocytosis. In terms of processing, EGF stimulates phosphorylation on Tyr-residues. In terms of tissue distribution, widely expressed with highest levels in heart and testis.

The protein resides in the membrane. It localises to the clathrin-coated pit. Its function is as follows. May coordinate the cellular actions of activated EGF receptors and Ral-GTPases. This chain is RalBP1-associated Eps domain-containing protein 1 (REPS1), found in Homo sapiens (Human).